A 135-amino-acid polypeptide reads, in one-letter code: Histone H2A (135 aa).

Belongs to the histone H2A family. In terms of assembly, the nucleosome is a histone octamer containing two molecules each of H2A, H2B, H3 and H4 assembled in one H3-H4 heterotetramer and two H2A-H2B heterodimers. The octamer wraps approximately 147 bp of DNA.

Its subcellular location is the nucleus. It is found in the chromosome. Functionally, core component of nucleosome. Nucleosomes wrap and compact DNA into chromatin, limiting DNA accessibility to the cellular machineries which require DNA as a template. Histones thereby play a central role in transcription regulation, DNA repair, DNA replication and chromosomal stability. DNA accessibility is regulated via a complex set of post-translational modifications of histones, also called histone code, and nucleosome remodeling. The sequence is that of Histone H2A from Trypanosoma cruzi.